Here is a 596-residue protein sequence, read N- to C-terminus: Probable lysosomal cobalamin transporter (596 aa).

The next 10 helical transmembrane spans lie at 13 to 33 (IWVA…ITTF), 45 to 65 (VSIV…LLPV), 99 to 119 (VVYY…IPFA), 150 to 170 (LGFV…PAAG), 201 to 221 (LLIT…LALL), 318 to 338 (LLGG…MLIT), 353 to 373 (GYIL…VQSA), 381 to 401 (ILMA…IATI), 425 to 445 (IATV…AMIV), and 512 to 532 (VFGA…MVVF). N-linked (GlcNAc...) asparagine glycosylation is present at Asn543. The segment at 576-596 (GRAKNRNGYGTGGGEGSNGRG) is disordered. The span at 584-596 (YGTGGGEGSNGRG) shows a compositional bias: gly residues.

It belongs to the LIMR family. LMBRD1 subfamily.

The protein localises to the lysosome membrane. In terms of biological role, probable lysosomal cobalamin transporter. Required to export cobalamin from lysosomes allowing its conversion to cofactors. In Podospora anserina (strain S / ATCC MYA-4624 / DSM 980 / FGSC 10383) (Pleurage anserina), this protein is Probable lysosomal cobalamin transporter.